The chain runs to 435 residues: MTTFSPREIVSELDRHIIGQHDAKRAVAIALRNRWRRQQLDESLRDEVMPKNILMIGPTGVGKTEISRRLAKLAGAPFIKVEATKFTEVGYVGRDVEQIIRDLVEIGIGLVREKKRAEVQAKAHQSAEERVLDALVGSTASPGTRESFRKKLRDGELDDKEIDIEVADSGSGMPGFEIPGMPGANIGVLNLSEMFGKAMGGRTKKVRTTVSKSYTDLVRDESDKLLDNEMIQREAVKSVENDGIVFLDEIDKIAARDGGMGAGVSREGVQRDLLPLVEGTTVSTKYGPVKTDHVLFIASGAFHVAKPSDLLPELQGRLPIRVELKPLTKEDFRRILTETEASLIRQYKALMATEELDLDFTDDAIDALADVAVHLNSSVENIGARRLQTVMERVLDEISFNAPDRGGSAVKIDQEYVKKHVGDLAADTDLSRYIL.

Residues isoleucine 18, 60–65 (GVGKTE), aspartate 248, glutamate 313, and arginine 385 contribute to the ATP site.

It belongs to the ClpX chaperone family. HslU subfamily. A double ring-shaped homohexamer of HslV is capped on each side by a ring-shaped HslU homohexamer. The assembly of the HslU/HslV complex is dependent on binding of ATP.

It is found in the cytoplasm. In terms of biological role, ATPase subunit of a proteasome-like degradation complex; this subunit has chaperone activity. The binding of ATP and its subsequent hydrolysis by HslU are essential for unfolding of protein substrates subsequently hydrolyzed by HslV. HslU recognizes the N-terminal part of its protein substrates and unfolds these before they are guided to HslV for hydrolysis. The chain is ATP-dependent protease ATPase subunit HslU from Agrobacterium fabrum (strain C58 / ATCC 33970) (Agrobacterium tumefaciens (strain C58)).